The sequence spans 487 residues: 3-octaprenyl-4-hydroxybenzoate carboxy-lyase (487 aa).

Mn(2+) is bound at residue Asn-172. Prenylated FMN is bound by residues 175–177 (IYR), 189–191 (RWL), and 194–195 (RG). Mn(2+) is bound at residue Glu-238. Asp-287 (proton donor) is an active-site residue.

It belongs to the UbiD family. As to quaternary structure, homohexamer. Requires prenylated FMN as cofactor. Mn(2+) serves as cofactor.

It is found in the cell membrane. It carries out the reaction a 4-hydroxy-3-(all-trans-polyprenyl)benzoate + H(+) = a 2-(all-trans-polyprenyl)phenol + CO2. It participates in cofactor biosynthesis; ubiquinone biosynthesis. Functionally, catalyzes the decarboxylation of 3-octaprenyl-4-hydroxy benzoate to 2-octaprenylphenol, an intermediate step in ubiquinone biosynthesis. The protein is 3-octaprenyl-4-hydroxybenzoate carboxy-lyase of Nitrosococcus oceani (strain ATCC 19707 / BCRC 17464 / JCM 30415 / NCIMB 11848 / C-107).